The chain runs to 430 residues: Putative glycylpeptide N-tetradecanoyltransferase 2 (430 aa).

Tetradecanoyl-CoA is bound by residues 47–50 (HKFW), 181–183 (LCV), and 189–193 (SKGLA). Catalysis depends on L430, which acts as the Proton acceptor; via carboxylate.

It belongs to the NMT family.

It catalyses the reaction N-terminal glycyl-[protein] + tetradecanoyl-CoA = N-tetradecanoylglycyl-[protein] + CoA + H(+). Its function is as follows. May add a myristoyl group to the N-terminal glycine residue of certain cellular proteins. This Arabidopsis thaliana (Mouse-ear cress) protein is Putative glycylpeptide N-tetradecanoyltransferase 2 (NMT2).